We begin with the raw amino-acid sequence, 69 residues long: uncharacterized protein (69 aa).

This is an uncharacterized protein from Mycobacterium bovis (strain ATCC BAA-935 / AF2122/97).